Reading from the N-terminus, the 558-residue chain is Type I restriction enzyme MjaIX methylase subunit (558 aa).

The interval 1–37 (MATLDKFLSIKENDEKTKKKESKKKSSKSNKTSESLV) is disordered. The segment covering 8-18 (LSIKENDEKTK) has biased composition (basic and acidic residues). Basic residues predominate over residues 19 to 28 (KKESKKKSSK). S-adenosyl-L-methionine-binding positions include 227 to 232 (KFYTPR), 256 to 258 (SGG), and D283.

Belongs to the N(4)/N(6)-methyltransferase family. The type I restriction/modification system is composed of three polypeptides R, M and S.

The catalysed reaction is a 2'-deoxyadenosine in DNA + S-adenosyl-L-methionine = an N(6)-methyl-2'-deoxyadenosine in DNA + S-adenosyl-L-homocysteine + H(+). In terms of biological role, the subtype gamma methyltransferase (M) subunit of a type I restriction enzyme. The M and S subunits together form a methyltransferase (MTase) that methylates A-3 on the top and A-2 on the bottom strand of the sequence 5'-CCAN(5)GTR-3'. In the presence of the R subunit the complex can also act as an endonuclease, binding to the same target sequence but cutting the DNA some distance from this site. Whether the DNA is cut or modified depends on the methylation state of the target sequence. When the target site is unmodified, the DNA is cut. When the target site is hemimethylated, the complex acts as a maintenance MTase modifying the DNA so that both strands become methylated. After locating a non-methylated recognition site, the enzyme complex serves as a molecular motor that translocates DNA in an ATP-dependent manner until a collision occurs that triggers cleavage. In Methanocaldococcus jannaschii (strain ATCC 43067 / DSM 2661 / JAL-1 / JCM 10045 / NBRC 100440) (Methanococcus jannaschii), this protein is Type I restriction enzyme MjaIX methylase subunit.